The primary structure comprises 399 residues: LEM domain-containing protein Bocksbeutel (399 aa).

In terms of domain architecture, LEM spans Leu-4 to Val-48. Disordered regions lie at residues Pro-49–Arg-103, Ser-119–Val-141, and Asn-233–Ala-287. Composition is skewed to polar residues over residues His-68–Ser-77 and Gly-89–Ser-99. Residues Asn-233–Phe-256 are compositionally biased toward polar residues. Residues Phe-377–Pro-397 form a helical membrane-spanning segment.

It is found in the nucleus inner membrane. The protein localises to the cytoplasm. It localises to the nucleus. Its subcellular location is the nucleoplasm. The protein resides in the endoplasmic reticulum. Its function is as follows. Inner nuclear membrane protein. May have a role in maintaining the structural integrity of the nuclear lamina. During pupal development, plays essential and redundant functions with the other LEM domain proteins; MAN1 and Ote. Also has a redundant but important role with Ote in larval development. This Drosophila melanogaster (Fruit fly) protein is LEM domain-containing protein Bocksbeutel.